The following is a 230-amino-acid chain: Transmembrane protein 221 (230 aa).

The next 4 membrane-spanning stretches (helical) occupy residues 12 to 32 (AMTLLGIPAAVLVALAAQLLF), 73 to 93 (ALAALAQVLGLSCLLLAALCG), 125 to 145 (LFCCGVSVYLAALAIYALLLF), and 147 to 167 (IEAGAAAASILGSGALILVAI). A disordered region spans residues 184–230 (RELSPPSFEDEPARPSEDSKSGCRAQPPQDEETETPIGAVTHQGSHF). The segment covering 194–204 (EPARPSEDSKS) has biased composition (basic and acidic residues).

Its subcellular location is the membrane. The chain is Transmembrane protein 221 (Tmem221) from Mus musculus (Mouse).